Here is a 187-residue protein sequence, read N- to C-terminus: UPF0301 protein VF_0434 (187 aa).

The protein belongs to the UPF0301 (AlgH) family.

The chain is UPF0301 protein VF_0434 from Aliivibrio fischeri (strain ATCC 700601 / ES114) (Vibrio fischeri).